Consider the following 640-residue polypeptide: Threonine--tRNA ligase (640 aa).

Positions 1–61 (MPTITLPDGS…ACDADVTIIT (61 aa)) constitute a TGS domain. Residues 243–534 (DHRKIGKALD…LIEQYAGNMP (292 aa)) form a catalytic region. The Zn(2+) site is built by C334, H385, and H511.

The protein belongs to the class-II aminoacyl-tRNA synthetase family. As to quaternary structure, homodimer. It depends on Zn(2+) as a cofactor.

The protein localises to the cytoplasm. The catalysed reaction is tRNA(Thr) + L-threonine + ATP = L-threonyl-tRNA(Thr) + AMP + diphosphate + H(+). Functionally, catalyzes the attachment of threonine to tRNA(Thr) in a two-step reaction: L-threonine is first activated by ATP to form Thr-AMP and then transferred to the acceptor end of tRNA(Thr). Also edits incorrectly charged L-seryl-tRNA(Thr). The protein is Threonine--tRNA ligase of Dichelobacter nodosus (strain VCS1703A).